The sequence spans 582 residues: ATP-dependent lipid A-core flippase (582 aa).

Helical transmembrane passes span L16–L36, L64–I84, I153–V173, P253–P273, and V275–M295. Residues I28–R310 form the ABC transmembrane type-1 domain. One can recognise an ABC transporter domain in the interval V342 to M578. G376–S383 contacts ATP.

The protein belongs to the ABC transporter superfamily. Lipid exporter (TC 3.A.1.106) family. Homodimer.

The protein localises to the cell inner membrane. The enzyme catalyses ATP + H2O + lipid A-core oligosaccharideSide 1 = ADP + phosphate + lipid A-core oligosaccharideSide 2.. Functionally, involved in lipopolysaccharide (LPS) biosynthesis. Translocates lipid A-core from the inner to the outer leaflet of the inner membrane. Transmembrane domains (TMD) form a pore in the inner membrane and the ATP-binding domain (NBD) is responsible for energy generation. This is ATP-dependent lipid A-core flippase from Escherichia coli O6:K15:H31 (strain 536 / UPEC).